Consider the following 92-residue polypeptide: Elongation factor 1-beta (92 aa).

Belongs to the EF-1-beta/EF-1-delta family.

Functionally, promotes the exchange of GDP for GTP in EF-1-alpha/GDP, thus allowing the regeneration of EF-1-alpha/GTP that could then be used to form the ternary complex EF-1-alpha/GTP/AAtRNA. This Hyperthermus butylicus (strain DSM 5456 / JCM 9403 / PLM1-5) protein is Elongation factor 1-beta.